Reading from the N-terminus, the 303-residue chain is Glycine--tRNA ligase alpha subunit (303 aa).

The protein belongs to the class-II aminoacyl-tRNA synthetase family. As to quaternary structure, tetramer of two alpha and two beta subunits.

It localises to the cytoplasm. The enzyme catalyses tRNA(Gly) + glycine + ATP = glycyl-tRNA(Gly) + AMP + diphosphate. The protein is Glycine--tRNA ligase alpha subunit of Stenotrophomonas maltophilia (strain R551-3).